A 258-amino-acid chain; its full sequence is Capsid protein (258 aa).

The short motif at 3–20 (KRPGDIIISTPGSKVRRR) is the Bipartite nuclear localization signal element. The Nuclear localization signal signature appears at 41–55 (RKRAWVNRPMYRKPT). The segment at 69-86 (CEGPCKVQSFEQRDDVKH) is a zinc-finger region. The short motif at 102-123 (LTHRVGKRFCIKSIYILGKIWL) is the Nuclear export signal element. Positions 202 to 249 (KRFYRLNHHVTYNHQEAGKYENHTENALLLYMACTHASNPVYATLKIR) match the Bipartite nuclear localization signal motif.

This sequence belongs to the geminiviridae capsid protein family. Homomultimer. Binds to single-stranded and double-stranded viral DNA. Interacts (via nuclear localization signals) with host importin alpha-1a.

Its subcellular location is the virion. It localises to the host nucleus. Its function is as follows. Encapsidates the viral DNA into characteristic twinned ('geminate') particles. Binds the genomic viral ssDNA and shuttles it into and out of the cell nucleus. The CP of bipartite geminiviruses is not required for cell-to-cell or systemic movement. The polypeptide is Capsid protein (African cassava mosaic virus (isolate West Kenyan 844) (ACMV)).